A 244-amino-acid polypeptide reads, in one-letter code: MAAEKILKPESQLKKAKYDEKKSEEFLKARAARRVANKQKRAAILERNAAHQKEYEAAERAVIDAKREAKASGSYYVEAQPKLVFVVRIKGINKIPPKPRKVLQLLRLTQINSGTFVKVTKATSELLKLIEPYVAYGYPSYSTVRQLVYKRGHGKINKQRIALSDNAIVEANLGKFGILSIDDLIHEIVTVGPHFKQANNFLWPFKLSNPSGGWGVPRKFKHFIQGGAFGNREQFINKLVKAMN.

It belongs to the universal ribosomal protein uL30 family.

The polypeptide is Large ribosomal subunit protein uL30 (RPL7) (Candida glabrata (strain ATCC 2001 / BCRC 20586 / JCM 3761 / NBRC 0622 / NRRL Y-65 / CBS 138) (Yeast)).